A 387-amino-acid chain; its full sequence is Protein arginine N-methyltransferase 1 (387 aa).

Residues 1 to 60 (MDQRKGSGSDANGGLAEATASRLRFEDPDEVMEENPAAAAATVGAEEEGGEGGGGEEVIG) are disordered. Over residues 34 to 44 (ENPAAAAATVG) the composition is skewed to low complexity. An SAM-dependent MTase PRMT-type domain is found at 66 to 387 (ADYYFDSYSH…VSRTQHYKMR (322 aa)). Residues H79, R88, G112, E134, and E163 each contribute to the S-adenosyl-L-methionine site. Catalysis depends on residues E178 and E187.

It belongs to the class I-like SAM-binding methyltransferase superfamily. Protein arginine N-methyltransferase family.

It localises to the nucleus. It carries out the reaction L-arginyl-[protein] + S-adenosyl-L-methionine = N(omega)-methyl-L-arginyl-[protein] + S-adenosyl-L-homocysteine + H(+). The catalysed reaction is L-arginyl-[protein] + 2 S-adenosyl-L-methionine = N(omega),N(omega)-dimethyl-L-arginyl-[protein] + 2 S-adenosyl-L-homocysteine + 2 H(+). Its function is as follows. Arginine methyltransferase that methylates (mono and asymmetric dimethylation) the guanidino nitrogens of arginyl residues present in target proteins. This chain is Protein arginine N-methyltransferase 1 (PRMT1), found in Oryza sativa subsp. indica (Rice).